The chain runs to 73 residues: uncharacterized protein (73 aa).

This is an uncharacterized protein from Vertebrata (FPV).